The sequence spans 442 residues: Glutamyl-tRNA reductase (442 aa).

Residues Thr49–Arg52, Ser109, Glu114–Gln116, and Gln120 each bind substrate. Cys50 (nucleophile) is an active-site residue. Gly189–Ser194 is an NADP(+) binding site.

Belongs to the glutamyl-tRNA reductase family. In terms of assembly, homodimer.

The enzyme catalyses (S)-4-amino-5-oxopentanoate + tRNA(Glu) + NADP(+) = L-glutamyl-tRNA(Glu) + NADPH + H(+). It functions in the pathway porphyrin-containing compound metabolism; protoporphyrin-IX biosynthesis; 5-aminolevulinate from L-glutamyl-tRNA(Glu): step 1/2. Its function is as follows. Catalyzes the NADPH-dependent reduction of glutamyl-tRNA(Glu) to glutamate 1-semialdehyde (GSA). The sequence is that of Glutamyl-tRNA reductase from Kineococcus radiotolerans (strain ATCC BAA-149 / DSM 14245 / SRS30216).